The chain runs to 202 residues: Na(+)-translocating NADH-quinone reductase subunit E (202 aa).

6 consecutive transmembrane segments (helical) span residues 11 to 31, 35 to 55, 81 to 101, 114 to 134, 144 to 164, and 182 to 202; these read SVFV…FLAI, IDAA…TVPV, FLGL…MEMV, GVFL…LLMV, VVFG…LAGI, and ITFI…GIAL.

The protein belongs to the NqrDE/RnfAE family. Composed of six subunits; NqrA, NqrB, NqrC, NqrD, NqrE and NqrF.

The protein localises to the cell inner membrane. It catalyses the reaction a ubiquinone + n Na(+)(in) + NADH + H(+) = a ubiquinol + n Na(+)(out) + NAD(+). Its function is as follows. NQR complex catalyzes the reduction of ubiquinone-1 to ubiquinol by two successive reactions, coupled with the transport of Na(+) ions from the cytoplasm to the periplasm. NqrA to NqrE are probably involved in the second step, the conversion of ubisemiquinone to ubiquinol. In Saccharophagus degradans (strain 2-40 / ATCC 43961 / DSM 17024), this protein is Na(+)-translocating NADH-quinone reductase subunit E.